Consider the following 112-residue polypeptide: uncharacterized protein (112 aa).

2 helical membrane passes run 55–75 and 91–111; these read LLEINLLVAATVIHLIAPTLF and LIMLGLRIAVLLAKQLLLLLL.

The protein localises to the membrane. This is an uncharacterized protein from Saccharomyces cerevisiae (strain ATCC 204508 / S288c) (Baker's yeast).